The following is a 200-amino-acid chain: Interferon lambda-1 (200 aa).

Residues 1–19 (MAAAWTVVLVTLVLGLAVA) form the signal peptide. Asn65 carries an N-linked (GlcNAc...) asparagine glycan. Cys68 and Cys164 are disulfide-bonded.

The protein belongs to the lambda interferon family.

It localises to the secreted. Its function is as follows. Cytokine with antiviral, antitumour and immunomodulatory activities. Plays a critical role in the antiviral host defense, predominantly in the epithelial tissues. Acts as a ligand for the heterodimeric class II cytokine receptor composed of IL10RB and IFNLR1, and receptor engagement leads to the activation of the JAK/STAT signaling pathway resulting in the expression of IFN-stimulated genes (ISG), which mediate the antiviral state. Has a restricted receptor distribution and therefore restricted targets: is primarily active in epithelial cells and this cell type-selective action is because of the epithelial cell-specific expression of its receptor IFNLR1. Exerts an immunomodulatory effect by up-regulating MHC class I antigen expression. This chain is Interferon lambda-1 (IFNL1), found in Homo sapiens (Human).